Here is a 263-residue protein sequence, read N- to C-terminus: uncharacterized protein (263 aa).

A DOD-type homing endonuclease domain is found at 107–246 (ILGVLNGDGS…CCSFLEKLGI (140 aa)).

This is an uncharacterized protein from Methanocaldococcus jannaschii (strain ATCC 43067 / DSM 2661 / JAL-1 / JCM 10045 / NBRC 100440) (Methanococcus jannaschii).